A 381-amino-acid polypeptide reads, in one-letter code: L-lactate dehydrogenase (381 aa).

Positions 1 to 380 (MIISASTDYR…TRDSLVRELG (380 aa)) constitute an FMN hydroxy acid dehydrogenase domain. A substrate-binding site is contributed by Tyr24. Residues Ser106 and Gln127 each contribute to the FMN site. Tyr129 contacts substrate. Thr155 contacts FMN. Residue Arg164 coordinates substrate. An FMN-binding site is contributed by Lys251. His275 (proton acceptor) is an active-site residue. Arg278 contacts substrate. FMN is bound at residue 306 to 330 (DSGIRSGLDVVRMIALGADTVLIGR).

Belongs to the FMN-dependent alpha-hydroxy acid dehydrogenase family. Homotetramer. It depends on FMN as a cofactor.

The protein localises to the cell inner membrane. The catalysed reaction is (S)-lactate + A = pyruvate + AH2. Its function is as follows. Catalyzes the conversion of L-lactate to pyruvate. Is coupled to the respiratory chain. The polypeptide is L-lactate dehydrogenase (Pseudomonas putida (strain GB-1)).